Here is a 231-residue protein sequence, read N- to C-terminus: MSEIKDVIVQGLWKNNSALVQLLGLCPLLAVTSTATNALGLGLATTLVLTLTNLTISTLRHWTPAEIRIPIYVMIIASVVSAVQMLINAYAFGLYQSLGIFIPLIVTNCIVVGRAEAFAAKKGPALSALDGFSIGMGATCAMFVLGSLREIIGNGTLFDGADALLGSWAKVLRVEIFRTDSPFLLAMLPPGAFIGLGLMLAGKYLIDEKMKKRRTEAVAERALPNGETGNV.

The next 6 helical transmembrane spans lie at 18 to 38 (ALVQ…ATNA), 39 to 59 (LGLG…ISTL), 63 to 83 (TPAE…VSAV), 86 to 106 (LINA…PLIV), 125 to 145 (ALSA…MFVL), and 182 to 202 (PFLL…MLAG).

It belongs to the NqrDE/RnfAE family. As to quaternary structure, the complex is composed of six subunits: RsxA, RsxB, RsxC, RsxD, RsxE and RsxG.

It localises to the cell inner membrane. Functionally, part of a membrane-bound complex that couples electron transfer with translocation of ions across the membrane. Required to maintain the reduced state of SoxR. In Escherichia coli O1:K1 / APEC, this protein is Ion-translocating oxidoreductase complex subunit E.